The primary structure comprises 434 residues: Homogentisate 1,2-dioxygenase (434 aa).

His289 (proton acceptor) is an active-site residue. Fe cation is bound by residues His332 and Glu338. 2 residues coordinate homogentisate: Tyr347 and His368. A Fe cation-binding site is contributed by His368.

Belongs to the homogentisate dioxygenase family. In terms of assembly, hexamer; dimer of trimers. The cofactor is Fe cation.

It catalyses the reaction homogentisate + O2 = 4-maleylacetoacetate + H(+). It participates in amino-acid degradation; L-phenylalanine degradation; acetoacetate and fumarate from L-phenylalanine: step 4/6. Functionally, involved in the catabolism of homogentisate (2,5-dihydroxyphenylacetate or 2,5-OH-PhAc), a central intermediate in the degradation of phenylalanine and tyrosine. Catalyzes the oxidative ring cleavage of the aromatic ring of homogentisate to yield maleylacetoacetate. The chain is Homogentisate 1,2-dioxygenase from Pseudomonas syringae pv. syringae (strain B728a).